The sequence spans 712 residues: Polyribonucleotide nucleotidyltransferase (712 aa).

Mg(2+) contacts are provided by D493 and D499. Positions 560-622 (PRLTKLTIDP…RDAEAAIERI (63 aa)) constitute a KH domain. One can recognise an S1 motif domain in the interval 632 to 700 (GEDYVGTVKG…DDGKMRLTRK (69 aa)).

The protein belongs to the polyribonucleotide nucleotidyltransferase family. It depends on Mg(2+) as a cofactor.

It is found in the cytoplasm. It catalyses the reaction RNA(n+1) + phosphate = RNA(n) + a ribonucleoside 5'-diphosphate. In terms of biological role, involved in mRNA degradation. Catalyzes the phosphorolysis of single-stranded polyribonucleotides processively in the 3'- to 5'-direction. This is Polyribonucleotide nucleotidyltransferase from Salinibacter ruber (strain DSM 13855 / M31).